A 281-amino-acid polypeptide reads, in one-letter code: Homeobox protein Hox-A5 (281 aa).

Disordered regions lie at residues 65–144 and 162–183; these read VGNE…PCSS and PLEEEKPAGSAPTTPQNVSDST. Polar residues-rich tracts occupy residues 68–99 and 114–127; these read ERTQGYSPSHSAATTPSVEPVRYTQSANSTGT and VASSSPVTETQSQH. Low complexity predominate over residues 132-144; sequence NSITTPCSTPCSS. Residues 172–183 show a composition bias toward polar residues; sequence APTTPQNVSDST. The Antp-type hexapeptide motif lies at 187–192; the sequence is IYPWMR. The segment at residues 205-264 is a DNA-binding region (homeobox); sequence GKRARTAYTRYQTLELEKEFHFNRYLTRRRRIEIAHALCLSERQIKIWFQNRRMKWKKDN.

It belongs to the Antp homeobox family.

It is found in the nucleus. Its function is as follows. Sequence-specific transcription factor which is part of a developmental regulatory system that provides cells with specific positional identities on the anterior-posterior axis. This chain is Homeobox protein Hox-A5 (hoxa5), found in Morone saxatilis (Striped bass).